The sequence spans 151 residues: Transcriptional regulator MraZ (151 aa).

SpoVT-AbrB domains are found at residues A5–E52 and A81–A124.

Belongs to the MraZ family. As to quaternary structure, forms oligomers.

The protein resides in the cytoplasm. The protein localises to the nucleoid. The protein is Transcriptional regulator MraZ of Pseudomonas syringae pv. syringae (strain B728a).